The following is a 471-amino-acid chain: V-type ATP synthase beta chain (471 aa).

It belongs to the ATPase alpha/beta chains family.

Its function is as follows. Produces ATP from ADP in the presence of a proton gradient across the membrane. The V-type beta chain is a regulatory subunit. This Streptococcus pyogenes serotype M18 (strain MGAS8232) protein is V-type ATP synthase beta chain.